Here is a 227-residue protein sequence, read N- to C-terminus: MSRGAAMIEVTNLCKSFVSGTRRVDVLSHVDMKIDAGERVAVVGASGAGKTSLMHILGGLDRPTSGDVLYDKQDIFSLKGAGLDDFRNRTLGFVFQFHQLLPEFTALENVMLPALIARWSRAKAKSAARELLTEVGLESRLSHKPGELSGGEQQRVAIARALVGSPRVLFADEPTGNLDSNTSESIYRLLSRLHETRGLTLFIVTHDARLAAGLDRVVHMADGRITG.

One can recognise an ABC transporter domain in the interval 8–226 (IEVTNLCKSF…VVHMADGRIT (219 aa)). 44 to 51 (GASGAGKT) is a binding site for ATP.

The protein belongs to the ABC transporter superfamily. Lipoprotein translocase (TC 3.A.1.125) family. The complex is composed of two ATP-binding proteins (LolD) and two transmembrane proteins (LolC and LolE).

The protein localises to the cell inner membrane. Its function is as follows. Part of the ABC transporter complex LolCDE involved in the translocation of mature outer membrane-directed lipoproteins, from the inner membrane to the periplasmic chaperone, LolA. Responsible for the formation of the LolA-lipoprotein complex in an ATP-dependent manner. This is Lipoprotein-releasing system ATP-binding protein LolD from Syntrophotalea carbinolica (strain DSM 2380 / NBRC 103641 / GraBd1) (Pelobacter carbinolicus).